The primary structure comprises 92 residues: MKTLLLTLVVVTIVCLDLGYTRRCFITPDVRSERCPPGQEVCYTKTWCDGFCGSRGKRVDLGCAATCPTPKKKGIDIICCSKDNCNTFPKWP.

Residues 1–21 (MKTLLLTLVVVTIVCLDLGYT) form the signal peptide. 5 disulfides stabilise this stretch: Cys24-Cys42, Cys35-Cys63, Cys48-Cys52, Cys67-Cys79, and Cys80-Cys85.

It belongs to the three-finger toxin family. Long-chain subfamily. Type II alpha-neurotoxin sub-subfamily. As to expression, expressed by the venom gland.

The protein resides in the secreted. In terms of biological role, binds with high affinity to muscular (alpha-1/CHRNA1) and neuronal (alpha-7/CHRNA7) nicotinic acetylcholine receptor (nAChR) and inhibits acetylcholine from binding to the receptor, thereby impairing neuromuscular and neuronal transmission. The polypeptide is Long neurotoxin 3FTx-Oxy1 (Oxyuranus microlepidotus (Inland taipan)).